Here is a 241-residue protein sequence, read N- to C-terminus: B9 domain-containing protein 1 (241 aa).

Residues 1-42 form a disordered region; the sequence is MSASEGISLPGNEETTPPHEKHKQKAKKAKKKSRSAKESVPN. Positions 20–34 are enriched in basic residues; it reads EKHKQKAKKAKKKSR. Positions 53–197 constitute a C2 B9-type domain; it reads FSLSIVGQIV…TSWLLRREPE (145 aa).

The protein belongs to the B9D family. As to quaternary structure, probable component of the tectonic-like complex (also named MKS complex), composed of B9d1, B9d2, Cc2d2a, Mks1 and tctn. Expressed in type I sensory neurons (at protein level). Expressed in spermatids and spermatocytes (at protein level).

Its subcellular location is the cytoplasm. It is found in the cytoskeleton. The protein localises to the cilium basal body. In terms of biological role, probable component of the tectonic-like complex (also named MKS complex), a complex localized at the transition zone of primary cilia. Required for ciliary structure and function. This is B9 domain-containing protein 1 from Drosophila melanogaster (Fruit fly).